The sequence spans 170 residues: 3-hydroxydecanoyl-[acyl-carrier-protein] dehydratase (170 aa).

Histidine 69 is a catalytic residue.

It belongs to the thioester dehydratase family. FabA subfamily. As to quaternary structure, homodimer.

It is found in the cytoplasm. The enzyme catalyses a (3R)-hydroxyacyl-[ACP] = a (2E)-enoyl-[ACP] + H2O. It carries out the reaction (3R)-hydroxydecanoyl-[ACP] = (2E)-decenoyl-[ACP] + H2O. The catalysed reaction is (2E)-decenoyl-[ACP] = (3Z)-decenoyl-[ACP]. The protein operates within lipid metabolism; fatty acid biosynthesis. Its function is as follows. Necessary for the introduction of cis unsaturation into fatty acids. Catalyzes the dehydration of (3R)-3-hydroxydecanoyl-ACP to E-(2)-decenoyl-ACP and then its isomerization to Z-(3)-decenoyl-ACP. Can catalyze the dehydratase reaction for beta-hydroxyacyl-ACPs with saturated chain lengths up to 16:0, being most active on intermediate chain length. In Caulobacter vibrioides (strain ATCC 19089 / CIP 103742 / CB 15) (Caulobacter crescentus), this protein is 3-hydroxydecanoyl-[acyl-carrier-protein] dehydratase.